A 404-amino-acid polypeptide reads, in one-letter code: Protein translocase subunit SecD (404 aa).

The next 6 helical transmembrane spans lie at 7–27 (HYIWLFLVIFVPALILYFNKV), 239–259 (LIALGVISVFMIAIYKIPGIV), 262–282 (IALLINGVLVLGLLSGIGAAL), 283–303 (TLPGIAGFILTLGMAVDSNVI), 330–350 (FPAIIDGNITTLLVAAVLFFL), and 357–377 (GFAVTLSLGVVATIITGVFVS).

Belongs to the SecD/SecF family. SecD subfamily. In terms of assembly, forms a complex with SecF. Part of the essential Sec protein translocation apparatus which comprises SecA, SecYEG and auxiliary proteins SecDF. Other proteins may also be involved.

Its subcellular location is the cell inner membrane. Its function is as follows. Part of the Sec protein translocase complex. Interacts with the SecYEG preprotein conducting channel. SecDF uses the proton motive force (PMF) to complete protein translocation after the ATP-dependent function of SecA. In Leptotrichia buccalis (strain ATCC 14201 / DSM 1135 / JCM 12969 / NCTC 10249 / C-1013-b), this protein is Protein translocase subunit SecD.